Here is a 1008-residue protein sequence, read N- to C-terminus: Translation initiation factor IF-2 (1008 aa).

3 disordered regions span residues 113–136 (AVTA…KGNV), 153–235 (DKDS…PAAP), and 253–405 (GLTV…YRKD). Composition is skewed to basic and acidic residues over residues 153 to 180 (DKDS…KAKP) and 189 to 213 (PKPE…KAET). Low complexity-rich tracts occupy residues 294 to 329 (GPNK…PRPQ) and 342 to 358 (GGPN…SNGP). Basic and acidic residues predominate over residues 365 to 381 (ASEKGEVTGKQIQDKIK). The 171-residue stretch at 507-677 (DRAPIVTIMG…LLEAEMLELK (171 aa)) folds into the tr-type G domain. Residues 516–523 (GHVDHGKT) are G1. 516–523 (GHVDHGKT) is a binding site for GTP. Residues 541–545 (GITQH) are G2. Residues 563–566 (DTPG) form a G3 region. GTP is bound by residues 563 to 567 (DTPGH) and 617 to 620 (NKID). Residues 617–620 (NKID) are G4. The segment at 653–655 (SAK) is G5.

Belongs to the TRAFAC class translation factor GTPase superfamily. Classic translation factor GTPase family. IF-2 subfamily.

It localises to the cytoplasm. In terms of biological role, one of the essential components for the initiation of protein synthesis. Protects formylmethionyl-tRNA from spontaneous hydrolysis and promotes its binding to the 30S ribosomal subunits. Also involved in the hydrolysis of GTP during the formation of the 70S ribosomal complex. This Cytophaga hutchinsonii (strain ATCC 33406 / DSM 1761 / CIP 103989 / NBRC 15051 / NCIMB 9469 / D465) protein is Translation initiation factor IF-2.